A 322-amino-acid polypeptide reads, in one-letter code: Glutamyl-Q tRNA(Asp) synthetase (322 aa).

Residues Arg28–Ser32 and Glu64 each bind L-glutamate. The 'HIGH' region signature appears at Pro31–Ser41. 4 residues coordinate Zn(2+): Cys120, Cys122, Tyr134, and Cys138. L-glutamate-binding residues include Tyr191 and Arg209. The 'KMSKS' region signature appears at Lys247–Gln251. Lys250 contacts ATP.

The protein belongs to the class-I aminoacyl-tRNA synthetase family. GluQ subfamily. Requires Zn(2+) as cofactor.

Its function is as follows. Catalyzes the tRNA-independent activation of glutamate in presence of ATP and the subsequent transfer of glutamate onto a tRNA(Asp). Glutamate is transferred on the 2-amino-5-(4,5-dihydroxy-2-cyclopenten-1-yl) moiety of the queuosine in the wobble position of the QUC anticodon. The chain is Glutamyl-Q tRNA(Asp) synthetase from Pectobacterium atrosepticum (strain SCRI 1043 / ATCC BAA-672) (Erwinia carotovora subsp. atroseptica).